The chain runs to 218 residues: MGTLLALVVGAALVSSAWGGCVEVDSETEAVYGMTFKILCISCKRRSETTAETFTEWTFRQKGTEEFVKILRYENEVLQLEEDERFEGRVVWNGSRGTKDLQDLSIFITNVTYNHSGDYECHVYRLLFFENYEHNTSVVKKIHIEVVDKANRDMASIVSEIMMYVLIVVLTIWLVAEMVYCYKKIAAATEAAAQENASEYLAITSESKENCTGVQVAE.

The N-terminal stretch at 1–18 (MGTLLALVVGAALVSSAW) is a signal peptide. The Extracellular segment spans residues 19–157 (GGCVEVDSET…DKANRDMASI (139 aa)). 2 cysteine pairs are disulfide-bonded: Cys21-Cys43 and Cys40-Cys121. An Ig-like C2-type domain is found at 22-150 (VEVDSETEAV…KIHIEVVDKA (129 aa)). Residues Asn93, Asn110, Asn114, and Asn135 are each glycosylated (N-linked (GlcNAc...) asparagine). A helical membrane pass occupies residues 158–179 (VSEIMMYVLIVVLTIWLVAEMV). The Cytoplasmic segment spans residues 180–218 (YCYKKIAAATEAAAQENASEYLAITSESKENCTGVQVAE).

This sequence belongs to the sodium channel auxiliary subunit SCN1B (TC 8.A.17) family. A voltage-gated sodium (Nav) channel consists of an ion-conducting pore-forming alpha subunit functional on its own that is regulated by one or more beta subunits. Interacts with SCN1A; regulatory subunit of SCN1A/Nav1.1. Interacts with SCN3A; regulatory subunit of SCN3A/Nav1.3. Interacts with SCN4A; regulatory subunit of SCN4A/Nav1.4. Interacts with SCN5A; regulatory subunit of SCN5A/Nav1.5. Interacts with SCN8A; regulatory subunit of SCN8A/Nav1.6. Interacts with SCN9A; regulatory subunit of SCN9A/Nav1.7. Interacts with SCN10A; regulatory subunit of SCN10A/Nav1.8. Interacts with NFASC. Interacts with TMEM65.

It localises to the cell membrane. It is found in the perikaryon. Its subcellular location is the cell projection. The protein localises to the axon. In terms of biological role, regulatory subunit of multiple voltage-gated sodium (Nav) channels directly mediating the depolarization of excitable membranes. Navs, also called VGSCs (voltage-gated sodium channels) or VDSCs (voltage-dependent sodium channels), operate by switching between closed and open conformations depending on the voltage difference across the membrane. In the open conformation they allow Na(+) ions to selectively pass through the pore, along their electrochemical gradient. The influx of Na+ ions provokes membrane depolarization, initiating the propagation of electrical signals throughout cells and tissues. The accessory beta subunits participate in localization and functional modulation of the Nav channels. Modulates the activity of SCN1A/Nav1.1, SCN2A/Nav1.2, SCN3A/Nav1.3, SCN4A/Nav1.4, SCN5A/Nav1.5, SCN8A/Nav1.6, SCN9A/Nav1.7 and SCN10A/Nav1.8. This is Sodium channel regulatory subunit beta-1 from Canis lupus familiaris (Dog).